Reading from the N-terminus, the 383-residue chain is Xylose/arabinose import ATP-binding protein XacJ (383 aa).

The 232-residue stretch at 4-235 (IQLTDLTKRF…PNNLFVAEFI (232 aa)) folds into the ABC transporter domain. ATP is bound at residue 36–43 (GPSGCGKS).

This sequence belongs to the ABC transporter superfamily. Carbohydrate uptake transporter-1 (CUT1) (TC 3.A.1.1) family. As to quaternary structure, the complex is composed of two ATP-binding proteins (XacJ and XacK), two transmembrane proteins (XacH and XacI) and a solute-binding protein (XacG).

The protein localises to the cell membrane. It catalyses the reaction D-xylose(out) + ATP + H2O = D-xylose(in) + ADP + phosphate + H(+). The catalysed reaction is L-arabinose(out) + ATP + H2O = L-arabinose(in) + ADP + phosphate + H(+). Part of the ABC transporter complex XacGHIJK involved in the uptake of xylose and arabinose. Responsible for energy coupling to the transport system. This Haloferax volcanii (strain ATCC 29605 / DSM 3757 / JCM 8879 / NBRC 14742 / NCIMB 2012 / VKM B-1768 / DS2) (Halobacterium volcanii) protein is Xylose/arabinose import ATP-binding protein XacJ.